Reading from the N-terminus, the 313-residue chain is Protein HEXIM2 (313 aa).

The span at 1–13 shows a compositional bias: polar residues; it reads MATVNHTNCNTAS. The interval 1 to 78 is disordered; that stretch reads MATVNHTNCN…RGSRTQSPGG (78 aa). Phosphoserine is present on residues S28, S52, S75, and S80. The span at 64–77 shows a compositional bias: polar residues; sequence SSCNIRGSRTQSPG. 3 disordered regions span residues 111–139, 155–194, and 267–313; these read EKQQ…PLAP, PNLD…DFSE, and QENE…AGDR. Residues 112–131 are compositionally biased toward basic and acidic residues; the sequence is KQQRDERQSQRASRVREEMF. The tract at residues 139–142 is interaction with P-TEFb; it reads PYNT. Residues 179-194 show a composition bias toward basic and acidic residues; sequence GQGRAHGEFQQRDFSE. Residues 207 to 276 are a coiled coil; it reads RSKQELVRDY…QENEMWNREG (70 aa). Positions 225–286 are interaction with CCNT1, HEXIM1 and HEXIM2; the sequence is QAEQETRRLR…GYCDQEKPAS (62 aa).

This sequence belongs to the HEXIM family. Homooligomer and heterooligomer with HEXIM1; probably dimeric. Core component of the 7SK RNP complex, at least composed of 7SK RNA, LARP7, MEPCE, HEXIM1 (or HEXIM2) and P-TEFb (composed of CDK9 and CCNT1/cyclin-T1). Interacts with CCNT2.

It localises to the nucleus. Transcriptional regulator which functions as a general RNA polymerase II transcription inhibitor. Core component of the 7SK RNP complex: in cooperation with 7SK snRNA sequesters P-TEFb in a large inactive 7SK snRNP complex preventing RNA polymerase II phosphorylation and subsequent transcriptional elongation. In Mus musculus (Mouse), this protein is Protein HEXIM2 (Hexim2).